An 861-amino-acid polypeptide reads, in one-letter code: Glucans biosynthesis glucosyltransferase H (861 aa).

6 helical membrane-spanning segments follow: residues 142–162 (FILL…MKGI), 188–208 (VLPY…FCWV), 516–536 (VFLT…FLVL), 573–593 (LFST…MLIW), 600–620 (FGGV…SVLL), and 683–703 (FLWW…VSVI).

Belongs to the glycosyltransferase 2 family. OpgH subfamily.

Its subcellular location is the cell inner membrane. The protein operates within glycan metabolism; osmoregulated periplasmic glucan (OPG) biosynthesis. Functionally, involved in the biosynthesis of osmoregulated periplasmic glucans (OPGs). This is Glucans biosynthesis glucosyltransferase H from Pseudomonas aeruginosa (strain LESB58).